The primary structure comprises 68 residues: Large ribosomal subunit protein uL30 (68 aa).

This sequence belongs to the universal ribosomal protein uL30 family. As to quaternary structure, part of the 50S ribosomal subunit.

The chain is Large ribosomal subunit protein uL30 from Pseudarthrobacter chlorophenolicus (strain ATCC 700700 / DSM 12829 / CIP 107037 / JCM 12360 / KCTC 9906 / NCIMB 13794 / A6) (Arthrobacter chlorophenolicus).